A 298-amino-acid chain; its full sequence is NAD kinase (298 aa).

The active-site Proton acceptor is Asp80. NAD(+)-binding positions include 80–81 (DG), 154–155 (ND), Arg182, Asp184, 195–200 (TAYALS), Ala219, and Gln253.

The protein belongs to the NAD kinase family. A divalent metal cation is required as a cofactor.

Its subcellular location is the cytoplasm. It catalyses the reaction NAD(+) + ATP = ADP + NADP(+) + H(+). Functionally, involved in the regulation of the intracellular balance of NAD and NADP, and is a key enzyme in the biosynthesis of NADP. Catalyzes specifically the phosphorylation on 2'-hydroxyl of the adenosine moiety of NAD to yield NADP. This is NAD kinase from Acidovorax ebreus (strain TPSY) (Diaphorobacter sp. (strain TPSY)).